We begin with the raw amino-acid sequence, 493 residues long: MAENLVNAFVTLVIENSDYEELDRIYLTNKVFALVGEGVADVETESSELIDLKDQLLQAGVKAGSVGELNEEQDIIGAQLMDLITPSPSAVNRNFWDTYKSNPEQAIADFYVQSKRNDYVKVKAIAQNIAYKAPTKYGDLEITINLSKPEKDPKAIAAAKNAVASDYPKCQLCMENEGYLGRINHPARSNHRVIRFQMEGNDWGFQYSPYAYFNEHSIFFYGKHEPMHISPLTFGRLLSIVEAFPGYFAGSNADLPIVGGSILTHEHYQGGRHTFPMEVAGIKEKVSFDGYSDVETGIVNWPMSVLRLRSEDKERLIALATKILNCWRGYSDEKAGVLAQSDGHPHHTITPIARRKDGKFELDLVLRDNQTSEEHPDGIYHPHKDVQHIKKENIGLIEVMGLAILPPRLKTELKDVEDYLLGQGNQVAPIHQEWADELKAQNPNVTAEEVTEVVRQSVADIFARVLEDAGVYKTNSEGLDQFKAFVDFVNLAD.

This sequence belongs to the galactose-1-phosphate uridylyltransferase type 2 family.

The protein localises to the cytoplasm. It carries out the reaction alpha-D-galactose 1-phosphate + UDP-alpha-D-glucose = alpha-D-glucose 1-phosphate + UDP-alpha-D-galactose. Its pathway is carbohydrate metabolism; galactose metabolism. This chain is Galactose-1-phosphate uridylyltransferase, found in Streptococcus salivarius.